Here is a 279-residue protein sequence, read N- to C-terminus: Zinc-finger homeodomain protein 1 (279 aa).

Over residues 1 to 13 (MDFDDHDDGDEEM) the composition is skewed to acidic residues. Positions 1-47 (MDFDDHDDGDEEMPPMPVSSSYETPPQHGLAGGGMAPKPPGEIGSHV) are disordered. The ZF-HD dimerization-type; degenerate zinc finger occupies 57–106 (YRECLKNHAVGIGGHAVDGCGEFMAAGEEGTIDALRCAACNCHRNFHRKE). The segment at 157–191 (AAAAAAGGHPQRPLALPSTSHSGRDDGDDLSGMVG) is disordered. A DNA-binding region (homeobox) is located at residues 215 to 278 (KKRFRTKFTQ…NNKHTLGKKL (64 aa)).

In terms of assembly, homo- and heterodimer with other ZFHD proteins.

It is found in the nucleus. Functionally, putative transcription factor. The polypeptide is Zinc-finger homeodomain protein 1 (ZHD1) (Oryza sativa subsp. indica (Rice)).